The primary structure comprises 334 residues: Methionyl-tRNA formyltransferase (334 aa).

111 to 114 (SILP) contacts (6S)-5,6,7,8-tetrahydrofolate.

This sequence belongs to the Fmt family.

It carries out the reaction L-methionyl-tRNA(fMet) + (6R)-10-formyltetrahydrofolate = N-formyl-L-methionyl-tRNA(fMet) + (6S)-5,6,7,8-tetrahydrofolate + H(+). Functionally, attaches a formyl group to the free amino group of methionyl-tRNA(fMet). The formyl group appears to play a dual role in the initiator identity of N-formylmethionyl-tRNA by promoting its recognition by IF2 and preventing the misappropriation of this tRNA by the elongation apparatus. This chain is Methionyl-tRNA formyltransferase, found in Trichormus variabilis (strain ATCC 29413 / PCC 7937) (Anabaena variabilis).